Consider the following 252-residue polypeptide: Probable anguibactin biosynthesis thioesterase AngT (252 aa).

Residues S92 and H229 contribute to the active site.

This sequence belongs to the thioesterase family.

It participates in siderophore biosynthesis; anguibactin biosynthesis. Functionally, probable thioesterase. Involved in anguibactin production, but is not essential for virulence or iron transport gene expression. This is Probable anguibactin biosynthesis thioesterase AngT (angT) from Vibrio anguillarum (strain ATCC 68554 / 775) (Listonella anguillarum).